The primary structure comprises 115 residues: Large ribosomal subunit protein bL20 (115 aa).

Belongs to the bacterial ribosomal protein bL20 family.

In terms of biological role, binds directly to 23S ribosomal RNA and is necessary for the in vitro assembly process of the 50S ribosomal subunit. It is not involved in the protein synthesizing functions of that subunit. This Chlorobium phaeobacteroides (strain DSM 266 / SMG 266 / 2430) protein is Large ribosomal subunit protein bL20.